The following is a 613-amino-acid chain: Potassium voltage-gated channel subfamily A member 5 (613 aa).

The disordered stretch occupies residues Met-1–Glu-108. The tetramerization domain stretch occupies residues Met-1–Glu-211. The Cytoplasmic portion of the chain corresponds to Met-1–Gly-247. Basic and acidic residues predominate over residues Gly-45–Ser-62. Tandem repeats lie at residues Asp-61–Pro-71 and Asp-72–Pro-82. Positions Asp-61–Pro-82 are 2 X 11 AA tandem repeat of D-[SP]-G-V-R-P-L-P-P-L-P. The span at Pro-66–Glu-83 shows a compositional bias: pro residues. Basic and acidic residues predominate over residues Glu-84–Pro-93. Lys-221 participates in a covalent cross-link: Glycyl lysine isopeptide (Lys-Gly) (interchain with G-Cter in SUMO). Residues Ser-248 to Leu-269 form a helical membrane-spanning segment. At Glu-270–Pro-323 the chain is on the extracellular side. Positions Leu-282 to Met-304 are disordered. Positions Pro-285–Ala-295 are enriched in pro residues. A helical membrane pass occupies residues Phe-324–Ala-345. Cys-346 is lipidated: S-palmitoyl cysteine. The Cytoplasmic segment spans residues Cys-346–Ile-356. The helical transmembrane segment at Met-357–Ala-377 threads the bilayer. Over Glu-378–Ser-395 the chain is Extracellular. The helical; Voltage-sensor transmembrane segment at Leu-396 to His-416 threads the bilayer. Topologically, residues Ser-417–Met-431 are cytoplasmic. Residues Lys-418–Met-431 form an S4-S5 linker region. Residues Arg-432–Tyr-453 form a helical membrane-spanning segment. The Extracellular portion of the chain corresponds to Phe-454 to Ile-467. The segment at residues Pro-468–Thr-479 is an intramembrane region (helical). The Selectivity filter signature appears at Thr-480–Asp-485. The stretch at Thr-480–Arg-487 is an intramembrane region. At Pro-488–Lys-494 the chain is on the extracellular side. A helical transmembrane segment spans residues Ile-495–Tyr-523. The Cytoplasmic segment spans residues His-524 to Leu-613. The tract at residues Pro-532 to Ser-559 is disordered. Residue Lys-536 forms a Glycyl lysine isopeptide (Lys-Gly) (interchain with G-Cter in SUMO) linkage. Residue Ser-557 is modified to Phosphoserine; by PKA. Residues Thr-611–Leu-613 carry the PDZ-binding motif.

This sequence belongs to the potassium channel family. A (Shaker) (TC 1.A.1.2) subfamily. Kv1.5/KCNA5 sub-subfamily. As to quaternary structure, homotetramer and heterotetramer of potassium channel proteins. Interacts with DLG1, which enhances channel currents. Forms a ternary complex with DLG1 and CAV3. Interacts with KCNAB1. Interacts with UBE2I. Interacts with XIRP2; the interaction is required for normal action potential configuration in the heart. Glycosylated. In terms of processing, sumoylated on Lys-221, and Lys-536, preferentially with SUMO3. Sumoylation regulates the voltage sensitivity of the channel. In terms of tissue distribution, pancreatic islets and insulinoma.

The protein localises to the cell membrane. It catalyses the reaction K(+)(in) = K(+)(out). Its activity is regulated as follows. Inhibited by 4-aminopyridine, nicotine, bepridil, correolide, and endothelin-1. Its function is as follows. Voltage-gated potassium channel that mediates transmembrane potassium transport in excitable membranes. Forms tetrameric potassium-selective channels through which potassium ions pass in accordance with their electrochemical gradient. The channel alternates between opened and closed conformations in response to the voltage difference across the membrane. Can form functional homotetrameric channels and heterotetrameric channels that contain variable proportions of KCNA1, KCNA2, KCNA4, KCNA5, and possibly other family members as well; channel properties depend on the type of alpha subunits that are part of the channel. Channel properties are modulated by cytoplasmic beta subunits that regulate the subcellular location of the alpha subunits and promote rapid inactivation. Homotetrameric channels display rapid activation and slow inactivation. Required for normal electrical conduction including formation of the infranodal ventricular conduction system and normal action potential configuration, as a result of its interaction with XIRP2. May play a role in regulating the secretion of insulin in normal pancreatic islets. In terms of biological role, exhibits a faster depolarization rate, reduced voltage-dependent recovery from inactivation and an excessive cumulative inactivation. The polypeptide is Potassium voltage-gated channel subfamily A member 5 (KCNA5) (Homo sapiens (Human)).